We begin with the raw amino-acid sequence, 24 residues long: Lectin (24 aa).

This sequence belongs to the leguminous lectin family. As to quaternary structure, homotetramer.

Functionally, agglutinates erythrocytes of blood group A. Binds in decreasing order of affinity: N-acetyl-D-galactosamine, D-galactose, and D-galactosamine. This is Lectin from Crotalaria pallida (Smooth rattlebox).